The primary structure comprises 402 residues: S-adenosylmethionine synthase (402 aa).

Residue 137 to 142 (GQGSAD) participates in ATP binding.

Belongs to the AdoMet synthase 2 family. It depends on Mg(2+) as a cofactor.

The enzyme catalyses L-methionine + ATP + H2O = S-adenosyl-L-methionine + phosphate + diphosphate. Its pathway is amino-acid biosynthesis; S-adenosyl-L-methionine biosynthesis; S-adenosyl-L-methionine from L-methionine: step 1/1. In terms of biological role, catalyzes the formation of S-adenosylmethionine from methionine and ATP. The polypeptide is S-adenosylmethionine synthase (Pyrobaculum aerophilum (strain ATCC 51768 / DSM 7523 / JCM 9630 / CIP 104966 / NBRC 100827 / IM2)).